We begin with the raw amino-acid sequence, 350 residues long: Olfactory receptor 52I2 (350 aa).

Topologically, residues 1-55 (MCQQILRDCILLIHHLCINRKKVSLVMLGPAYNHTMETPASFLLVGIPGLQSSHL) are extracellular. N-linked (GlcNAc...) asparagine glycosylation occurs at asparagine 33. The chain crosses the membrane as a helical span at residues 56–76 (WLAISLSAMYIIALLGNTIIV). Residues 77–84 (TAIWMDST) lie on the Cytoplasmic side of the membrane. The helical transmembrane segment at 85–105 (RHEPMYCFLCVLAAVDIVMAS) threads the bilayer. The Extracellular portion of the chain corresponds to 106–129 (SVVPKMVSIFCSGDSSISFSACFT). Cysteine 127 and cysteine 219 are oxidised to a cystine. Residues 130–150 (QMFFVHLATAVETGLLLTMAF) form a helical membrane-spanning segment. Residues 151–169 (DRYVAICKPLHYKRILTPQ) are Cytoplasmic-facing. A helical transmembrane segment spans residues 170–190 (VMLGMSMAITIRAIIAITPLS). Topologically, residues 191 to 226 (WMVSHLPFCGSNVVVHSYCEHIALARLACADPVPSS) are extracellular. A helical membrane pass occupies residues 227-247 (LYSLIGSSLMVGSDVAFIAAS). The Cytoplasmic portion of the chain corresponds to 248 to 267 (YILILKAVFGLSSKTAQLKA). The chain crosses the membrane as a helical span at residues 268-288 (LSTCGSHVGVMALYYLPGMAS). Residues 289 to 304 (IYAAWLGQDVVPLHTQ) lie on the Extracellular side of the membrane. Residues 305 to 325 (VLLADLYVIIPATLNPIIYGM) form a helical membrane-spanning segment. The Cytoplasmic segment spans residues 326-350 (RTKQLRERIWSYLMHVLFDHSNLGS).

It belongs to the G-protein coupled receptor 1 family.

It is found in the cell membrane. In terms of biological role, odorant receptor. This chain is Olfactory receptor 52I2 (OR52I2), found in Homo sapiens (Human).